A 71-amino-acid chain; its full sequence is Large ribosomal subunit protein eL38 (71 aa).

It belongs to the eukaryotic ribosomal protein eL38 family.

The chain is Large ribosomal subunit protein eL38 (RpL38) from Argas monolakensis (Mono lake bird tick).